The primary structure comprises 229 residues: Heptaprenylglyceryl phosphate synthase (229 aa).

A sn-glycerol 1-phosphate-binding site is contributed by K12. D14 and S40 together coordinate Mg(2+). Residues 159-164 (YLEYSG), G189, and 209-210 (GN) each bind sn-glycerol 1-phosphate.

It belongs to the GGGP/HepGP synthase family. Group I subfamily. In terms of assembly, homodimer. The cofactor is Mg(2+).

It catalyses the reaction sn-glycerol 1-phosphate + all-trans-heptaprenyl diphosphate = 3-heptaprenyl-sn-glycero-1-phosphate + diphosphate. Its pathway is membrane lipid metabolism; glycerophospholipid metabolism. Functionally, prenyltransferase that catalyzes in vivo the transfer of the heptaprenyl moiety of heptaprenyl pyrophosphate (HepPP; 35 carbon atoms) to the C3 hydroxyl of sn-glycerol-1-phosphate (G1P), producing heptaprenylglyceryl phosphate (HepGP). This reaction is an ether-bond-formation step in the biosynthesis of archaea-type G1P-based membrane lipids found in Bacillales. The polypeptide is Heptaprenylglyceryl phosphate synthase (Bacillus mycoides (strain KBAB4) (Bacillus weihenstephanensis)).